Reading from the N-terminus, the 174-residue chain is ATP-dependent protease subunit HslV (174 aa).

Thr-2 is a catalytic residue. Na(+) contacts are provided by Gly-157, Cys-160, and Thr-163.

The protein belongs to the peptidase T1B family. HslV subfamily. A double ring-shaped homohexamer of HslV is capped on each side by a ring-shaped HslU homohexamer. The assembly of the HslU/HslV complex is dependent on binding of ATP.

The protein localises to the cytoplasm. It catalyses the reaction ATP-dependent cleavage of peptide bonds with broad specificity.. With respect to regulation, allosterically activated by HslU binding. Its function is as follows. Protease subunit of a proteasome-like degradation complex believed to be a general protein degrading machinery. The protein is ATP-dependent protease subunit HslV of Shewanella piezotolerans (strain WP3 / JCM 13877).